A 348-amino-acid chain; its full sequence is MSRFWSPFVKDLVPYVPGEQPKLARLVKLNTNENPYGPSPKALEAMRGELNDNLRLYPDPNGDRLKQAVAEYYGVTPAQVFVGNGSDEVLAHIFHGLFQHDAPLLFPDISYSFYPVYCGLYGIAFEQVALDEQFQIRIEDYKKPNAGIIFPNPNAPTGCLMPLQVVEQLLQANRDSVVVVDEAYIDFGGETAISLVDRYDNLLVTQTLSKSRSLAGLRVGLAVGHPDLIEALERIKNSFNSYPLDRAAIVGAAVAFEDREYFEDTCRKVIDSREVLVGQLQAKGFEVLPSAANFIFARHPQQDAGELAARLREQGVIVRHFKQPRIAQFLRITIGTPEMNQALLDALS.

Lys210 is modified (N6-(pyridoxal phosphate)lysine).

Belongs to the class-II pyridoxal-phosphate-dependent aminotransferase family. Histidinol-phosphate aminotransferase subfamily. In terms of assembly, homodimer. The cofactor is pyridoxal 5'-phosphate.

It carries out the reaction L-histidinol phosphate + 2-oxoglutarate = 3-(imidazol-4-yl)-2-oxopropyl phosphate + L-glutamate. It functions in the pathway amino-acid biosynthesis; L-histidine biosynthesis; L-histidine from 5-phospho-alpha-D-ribose 1-diphosphate: step 7/9. The chain is Histidinol-phosphate aminotransferase from Pseudomonas putida (strain ATCC 700007 / DSM 6899 / JCM 31910 / BCRC 17059 / LMG 24140 / F1).